Reading from the N-terminus, the 415-residue chain is MFADLDYDIEEDKLGIPTVPGKVTLQKDAQNLIGISIGGGAQYCPCLYIVQVFDNTPAALDGTVAAGDEITGVNGRSIKGKTKVEVAKMIQEVKGEVTIHYNKLQADPKQGMSLDIVLKKVKHRLVENMSSGTADALGLSRAILCNDGLVKRLEELERTAELYKGMTEHTKNLLRAFYELSQTHRAFGDVFSVIGVREPQPAASEAFVKFADAHRSIEKFGIRLLKTIKPMLTDLNTYLNKAIPDTRLTIKKYLDVKFEYLSYCLKVKEMDDEEYSCIALGEPLYRVSTGNYEYRLILRCRQEARARFSQMRKDVLEKMELLDQKHVQDIVFQLQRLVSTMSKYYNDCYAVLRDADVFPIEVDLAHTTLAYGLNQEEFTDGEEEEEEEDTAAGEPSRDTRGAAGPLDKGGSWCDS.

A PDZ domain is found at 22-105 (KVTLQKDAQN…EVTIHYNKLQ (84 aa)). Residues C44 and C46 each contribute to the Zn(2+) site. T82 bears the Phosphothreonine mark. An AH domain is found at 144 to 357 (LCNDGLVKRL…CYAVLRDADV (214 aa)). The interval 376–415 (EEFTDGEEEEEEEDTAAGEPSRDTRGAAGPLDKGGSWCDS) is disordered. Residues 377–391 (EFTDGEEEEEEEDTA) are compositionally biased toward acidic residues. C413 carries the S-palmitoyl cysteine; by DHHC8 lipid modification.

As to quaternary structure, monomer and homodimer. Interacts with CXADR. Interacts presynaptically with the glutamate receptors GRIA2, GRIA3, GRIK3, isoform 3 of GRIA4, isoform A of GRM4, GRM7 and GRM8; with NAPA and NAPB; and with BTG2. The interaction with NAPA and NAPB disrupts the interaction with GRIA2, conducting to the internalization of GRIA2. Interacts with PRKCA; with the amine transporters SLC6A2 and SLC6A3; with the channels ASIC1 and ASIC2; with the GTP-binding proteins ARF1 and ARF3; with the ephrin receptor tyrosine kinases EPHA7, EPHB1 and EPHB2; with ERBB2 and through its PDZ domain with the C-terminal tail of PRLHR. Interacts with UNC5A. Interacts (via AH domain) with NCS1/FREQ; in a calcium-dependent manner. Interacts with F-actin and associates with the ARP2/3 complex. Interacts (via PDZ domain) with ARF1 (activated); the interaction blocks Arp2/3 complex inhibition. Interacts with SORCS3. In terms of processing, phosphorylation at Thr-82 appears to inhibit the interaction with AMPA receptors. Post-translationally, palmitoylation on Cys-413 is essential for long-term synaptic depression (LTD). Ubiquitous.

It is found in the cytoplasm. Its subcellular location is the perinuclear region. It localises to the membrane. The protein resides in the postsynaptic density. The protein localises to the synapse. It is found in the synaptosome. Its subcellular location is the cytoskeleton. Its function is as follows. Probable adapter protein that bind to and organize the subcellular localization of a variety of membrane proteins containing some PDZ recognition sequence. Involved in the clustering of various receptors, possibly by acting at the receptor internalization level. Plays a role in synaptic plasticity by regulating the trafficking and internalization of AMPA receptors. May be regulated upon PRKCA activation. May regulate ASIC1/ASIC3 channel. Regulates actin polymerization by inhibiting the actin-nucleating activity of the Arp2/3 complex; the function is competitive with nucleation promoting factors and is linked to neuronal morphology regulation and AMPA receptor (AMPAR) endocytosis. Via interaction with the Arp2/3 complex involved in regulation of synaptic plasicity of excitatory synapses and required for spine shrinkage during long-term depression (LTD). Involved in regulation of astrocyte morphology, antagonistic to Arp2/3 complex activator WASL/N-WASP function. The polypeptide is PRKCA-binding protein (PICK1) (Homo sapiens (Human)).